Consider the following 582-residue polypeptide: ATP-dependent lipid A-core flippase (582 aa).

A run of 6 helical transmembrane segments spans residues 23 to 43, 61 to 81, 140 to 160, 163 to 183, 247 to 267, and 273 to 293; these read AAFI…TLFL, ILLY…SLNV, AVLV…LMFY, WQLS…VGVV, AIST…VLVI, and MLGE…IMLL. One can recognise an ABC transmembrane type-1 domain in the interval 26–308; the sequence is IAAILCMIGY…LTNVNSDFQR (283 aa). Positions 340 to 576 constitute an ABC transporter domain; it reads IVFDDVTFSY…EGAYFQLHNL (237 aa). 374-381 serves as a coordination point for ATP; it reads GRSGSGKS.

The protein belongs to the ABC transporter superfamily. Lipid exporter (TC 3.A.1.106) family. Homodimer.

It localises to the cell inner membrane. The catalysed reaction is ATP + H2O + lipid A-core oligosaccharideSide 1 = ADP + phosphate + lipid A-core oligosaccharideSide 2.. Its function is as follows. Involved in lipopolysaccharide (LPS) biosynthesis. Translocates lipid A-core from the inner to the outer leaflet of the inner membrane. Transmembrane domains (TMD) form a pore in the inner membrane and the ATP-binding domain (NBD) is responsible for energy generation. This chain is ATP-dependent lipid A-core flippase, found in Idiomarina loihiensis (strain ATCC BAA-735 / DSM 15497 / L2-TR).